The primary structure comprises 729 residues: MSDLKCPFSGHTGAVTASAHTGNRQWWPIQIDLGLLHQHHPASNPLGDTFDYPAAFAGLDLEALKADLAALMTDSQDWWPADWGHYGGLFIRMAWHSAGTYRGADGRGGAGHGNQRFAPLNSWPDNTNLDKARRLLWPLKRKYGNAISWADLIILSGNVALESMGFRTFGFAGGRTDIWQPEEDVFWGKETEWLSDERHTTEGALDQPLAAVEMGLVYVNPEGPHGHPDPVASGPDVRDTFARMGMTMEETVALVAGGHTFGKCHGAAPVSQLEAEPEGAELHQQGLGWHNRFESGKGEHTITSGIEGAWKPHPTRWDQGYFEMMFTYEWELTKSPAGAWQWVAKDVKPEHMIPDAHVPGRASAPIMTTADLSLRHDPLMEPVARRFHQDQDAFADAFARAWFKLTHRDLGPRALYLGADVPEEIQIWQDPVPALDHPLIGAVEIKALKQKLLATGCSVGALVATAWGAASTFRGSDRRGGANGGRIRFQPQNTWEVNDPEQLRSVLQTLETVQQQFNAEATGGQRVSMADLIVLAGSAAVEQAAAAGGHSVTVPFLPGRMDASADQTDTASFNLLKPIADGFRNWQRSGLPLRAEECLVDRAQQLGLSAPEMTVLLAGLRVLGANNGGNRQGVLTDRVGVLSNDFCVNLLDMSIRWSPTSEAMEGYIGRDAQGSERWTASRADLVFGSNSQLRAIVEVYAQDDGASRFVSDFVQAWVKVMNLDRFDVR.

The tryptophyl-tyrosyl-methioninium (Trp-Tyr) (with M-244) cross-link spans tryptophan 95 to tyrosine 218. The active-site Proton acceptor is histidine 96. A cross-link (tryptophyl-tyrosyl-methioninium (Tyr-Met) (with W-95)) is located at residues tyrosine 218–methionine 244. Residue histidine 259 participates in heme b binding.

The protein belongs to the peroxidase family. Peroxidase/catalase subfamily. As to quaternary structure, homodimer or homotetramer. Heme b is required as a cofactor. In terms of processing, formation of the three residue Trp-Tyr-Met cross-link is important for the catalase, but not the peroxidase activity of the enzyme.

The enzyme catalyses H2O2 + AH2 = A + 2 H2O. The catalysed reaction is 2 H2O2 = O2 + 2 H2O. Functionally, bifunctional enzyme with both catalase and broad-spectrum peroxidase activity. In Synechococcus sp. (strain CC9605), this protein is Catalase-peroxidase.